Consider the following 450-residue polypeptide: Tubulin alpha-1 chain (450 aa).

GTP-binding residues include Gln-11, Glu-71, Gly-144, Thr-145, Thr-179, Asn-206, and Asn-228. Glu-71 contributes to the Mg(2+) binding site. The active site involves Glu-254.

The protein belongs to the tubulin family. In terms of assembly, dimer of alpha and beta chains. A typical microtubule is a hollow water-filled tube with an outer diameter of 25 nm and an inner diameter of 15 nM. Alpha-beta heterodimers associate head-to-tail to form protofilaments running lengthwise along the microtubule wall with the beta-tubulin subunit facing the microtubule plus end conferring a structural polarity. Microtubules usually have 13 protofilaments but different protofilament numbers can be found in some organisms and specialized cells. Mg(2+) is required as a cofactor. In terms of processing, undergoes a tyrosination/detyrosination cycle, the cyclic removal and re-addition of a C-terminal tyrosine residue by the enzymes tubulin tyrosine carboxypeptidase (TTCP) and tubulin tyrosine ligase (TTL), respectively.

The protein resides in the cytoplasm. The protein localises to the cytoskeleton. The enzyme catalyses GTP + H2O = GDP + phosphate + H(+). Tubulin is the major constituent of microtubules, a cylinder consisting of laterally associated linear protofilaments composed of alpha- and beta-tubulin heterodimers. Microtubules grow by the addition of GTP-tubulin dimers to the microtubule end, where a stabilizing cap forms. Below the cap, tubulin dimers are in GDP-bound state, owing to GTPase activity of alpha-tubulin. The chain is Tubulin alpha-1 chain (TUBA1) from Hordeum vulgare (Barley).